The primary structure comprises 360 residues: N5-carboxyaminoimidazole ribonucleotide synthase (360 aa).

ATP is bound by residues arginine 98, lysine 138, 143 to 149 (GYDGKGQ), 173 to 176 (EGFV), glutamate 181, histidine 204, and 255 to 256 (NE). Residues 102-285 (KSMFKDLGIP…QFENHLRAVA (184 aa)) form the ATP-grasp domain.

It belongs to the PurK/PurT family. Homodimer.

The catalysed reaction is 5-amino-1-(5-phospho-beta-D-ribosyl)imidazole + hydrogencarbonate + ATP = 5-carboxyamino-1-(5-phospho-D-ribosyl)imidazole + ADP + phosphate + 2 H(+). Its pathway is purine metabolism; IMP biosynthesis via de novo pathway; 5-amino-1-(5-phospho-D-ribosyl)imidazole-4-carboxylate from 5-amino-1-(5-phospho-D-ribosyl)imidazole (N5-CAIR route): step 1/2. Its function is as follows. Catalyzes the ATP-dependent conversion of 5-aminoimidazole ribonucleotide (AIR) and HCO(3)(-) to N5-carboxyaminoimidazole ribonucleotide (N5-CAIR). The chain is N5-carboxyaminoimidazole ribonucleotide synthase from Pseudomonas aeruginosa (strain ATCC 15692 / DSM 22644 / CIP 104116 / JCM 14847 / LMG 12228 / 1C / PRS 101 / PAO1).